The sequence spans 90 residues: Small ribosomal subunit protein bS16 (90 aa).

It belongs to the bacterial ribosomal protein bS16 family.

The sequence is that of Small ribosomal subunit protein bS16 from Geobacillus thermodenitrificans (strain NG80-2).